Reading from the N-terminus, the 329-residue chain is Secretory carrier-associated membrane protein 2 (329 aa).

2 disordered regions span residues 1 to 21 (MSAFDTNPFADPVDVNPFQDP) and 51 to 72 (VTQLPGSSQPAVLQPSVEPTQP). Over 1 to 153 (MSAFDTNPFA…DYQRICKMLY (153 aa)) the chain is Cytoplasmic. The chain crosses the membrane as a helical span at residues 154-174 (YLWMLHSVTLFLNLLACLAWF). Topologically, residues 175–181 (SGNSSKG) are lumenal. Residues 182 to 202 (VDFGLSILWFLIFTPCAFLCW) form a helical membrane-spanning segment. Over 203–218 (YRPIYKAFRSDNSFSF) the chain is Cytoplasmic. Positions 203 to 218 (YRPIYKAFRSDNSFSF) are interaction with SLC9A7. A helical transmembrane segment spans residues 219–239 (FVFFFVFFCQIGIYIIQLVGI). At 240 to 262 (PGLGDSGWIAALSTLDNHSLAIS) the chain is on the lumenal side. Residues 263–283 (VIMMVVAGFFTLCAVLSVFLL) form a helical membrane-spanning segment. Residues 284–329 (QRVHSLYRRTGASFQQAQEEFSQGIFSSRTFHRAASSAAQGAFQGN) lie on the Cytoplasmic side of the membrane. 2 positions are modified to phosphoserine: Ser-319 and Ser-320.

This sequence belongs to the SCAMP family. As to quaternary structure, interacts with SLC6A4 and SLC9A7. Interacts with SLC9A5; this interaction regulates SLC9A5 cell-surface targeting and SLC9A5 activity. In terms of tissue distribution, widely expressed.

The protein localises to the golgi apparatus. It localises to the trans-Golgi network membrane. It is found in the recycling endosome membrane. Functions in post-Golgi recycling pathways. Acts as a recycling carrier to the cell surface. This chain is Secretory carrier-associated membrane protein 2 (SCAMP2), found in Homo sapiens (Human).